The following is a 359-amino-acid chain: Adenosine 3'-phospho 5'-phosphosulfate transporter 1 (359 aa).

7 helical membrane passes run 26-46 (NMKLALATGGIMGSFLLYGIL), 68-88 (STFLVLSNRVFAALMAIVIVL), 157-177 (YSIALTITTGCMIFFLTGKIS), 184-204 (TSYGIILMALYMFFDSFTSTF), 228-248 (SIISVFILILNGRLFPAIEFI), 254-276 (VFFDSTMLSASAGLGQMVIYYTI), and 300-320 (TLIYLHPLSNTQWIGALLVFG). The interval 332 to 359 (KKHGGHSHGGSNAATTTTPSNNSNNTEK) is disordered. Positions 340 to 359 (GGSNAATTTTPSNNSNNTEK) are enriched in low complexity.

Belongs to the nucleotide-sugar transporter family. SLC35B subfamily.

The protein localises to the golgi apparatus membrane. It carries out the reaction 3'-phosphoadenylyl sulfate(in) + adenosine 3',5'-bisphosphate(out) = 3'-phosphoadenylyl sulfate(out) + adenosine 3',5'-bisphosphate(in). In terms of biological role, probably functions as a 3'-phosphoadenylyl sulfate:adenosine 3',5'-bisphosphate antiporter at the Golgi membranes. Mediates the transport from the cytosol into the lumen of the Golgi of 3'-phosphoadenylyl sulfate/adenosine 3'-phospho 5'-phosphosulfate (PAPS), a universal sulfuryl donor for sulfation events that take place in that compartment. This Dictyostelium discoideum (Social amoeba) protein is Adenosine 3'-phospho 5'-phosphosulfate transporter 1 (slc35b2).